The primary structure comprises 310 residues: Methionyl-tRNA formyltransferase (310 aa).

106–109 (SLLP) serves as a coordination point for (6S)-5,6,7,8-tetrahydrofolate.

This sequence belongs to the Fmt family.

The catalysed reaction is L-methionyl-tRNA(fMet) + (6R)-10-formyltetrahydrofolate = N-formyl-L-methionyl-tRNA(fMet) + (6S)-5,6,7,8-tetrahydrofolate + H(+). Functionally, attaches a formyl group to the free amino group of methionyl-tRNA(fMet). The formyl group appears to play a dual role in the initiator identity of N-formylmethionyl-tRNA by promoting its recognition by IF2 and preventing the misappropriation of this tRNA by the elongation apparatus. The chain is Methionyl-tRNA formyltransferase from Fervidobacterium nodosum (strain ATCC 35602 / DSM 5306 / Rt17-B1).